Here is a 134-residue protein sequence, read N- to C-terminus: Large ribosomal subunit protein eL28 (134 aa).

Residue serine 60 is modified to Phosphoserine.

This sequence belongs to the eukaryotic ribosomal protein eL28 family. In terms of assembly, component of the large ribosomal subunit (LSU). Mature yeast ribosomes consist of a small (40S) and a large (60S) subunit. The 40S small subunit contains 1 molecule of ribosomal RNA (18S rRNA) and at least 33 different proteins. The large 60S subunit contains 3 rRNA molecules (25S, 5.8S and 5S rRNA) and at least 46 different proteins.

The protein resides in the cytoplasm. Its function is as follows. Component of the ribosome, a large ribonucleoprotein complex responsible for the synthesis of proteins in the cell. The small ribosomal subunit (SSU) binds messenger RNAs (mRNAs) and translates the encoded message by selecting cognate aminoacyl-transfer RNA (tRNA) molecules. The large subunit (LSU) contains the ribosomal catalytic site termed the peptidyl transferase center (PTC), which catalyzes the formation of peptide bonds, thereby polymerizing the amino acids delivered by tRNAs into a polypeptide chain. The nascent polypeptides leave the ribosome through a tunnel in the LSU and interact with protein factors that function in enzymatic processing, targeting, and the membrane insertion of nascent chains at the exit of the ribosomal tunnel. This is Large ribosomal subunit protein eL28 (rpl44) from Schizosaccharomyces pombe (strain 972 / ATCC 24843) (Fission yeast).